The primary structure comprises 229 residues: MKPRTSPDSPLLFDTAPLVPDFRLELKARKAGHWPVAGADEAGRGPLAGPVVAAAVILDPKRIPEGLNDSKQLSAQRREELFVQILATATVSIASSSSTRIDETDIRKASLDAMRRAICSLAVPASYVLTDGLDVPPGLDCPGQAVVKGDARSVSIAAASIVAKVTRDRMMARAHNVFPDYGFAAHAGYGTAQHRTGIEKHGPCSLHRMSFRPLRKSEDGPEMDELIPE.

An RNase H type-2 domain is found at 34–223 (WPVAGADEAG…LRKSEDGPEM (190 aa)). Residues Asp-40, Glu-41, and Asp-131 each coordinate a divalent metal cation. The interval 209–229 (MSFRPLRKSEDGPEMDELIPE) is disordered. Residues 220-229 (GPEMDELIPE) are compositionally biased toward acidic residues.

This sequence belongs to the RNase HII family. Mn(2+) serves as cofactor. Mg(2+) is required as a cofactor.

The protein localises to the cytoplasm. It carries out the reaction Endonucleolytic cleavage to 5'-phosphomonoester.. Its function is as follows. Endonuclease that specifically degrades the RNA of RNA-DNA hybrids. This Rhizobium etli (strain CIAT 652) protein is Ribonuclease HII.